A 360-amino-acid chain; its full sequence is Peptide chain release factor 1 (360 aa).

Position 235 is an N5-methylglutamine (Q235). A compositionally biased stretch (polar residues) spans 285 to 295 (AQQASEASTRK). The tract at residues 285–305 (AQQASEASTRKSLIGSGDRSD) is disordered.

Belongs to the prokaryotic/mitochondrial release factor family. Methylated by PrmC. Methylation increases the termination efficiency of RF1.

The protein localises to the cytoplasm. Its function is as follows. Peptide chain release factor 1 directs the termination of translation in response to the peptide chain termination codons UAG and UAA. The sequence is that of Peptide chain release factor 1 from Thiobacillus denitrificans (strain ATCC 25259 / T1).